A 502-amino-acid chain; its full sequence is Bone morphogenetic protein receptor type-1B (502 aa).

Positions 1–10 are enriched in polar residues; that stretch reads MPLLSSSKLS. The first 13 residues, 1-13, serve as a signal peptide directing secretion; it reads MPLLSSSKLSMES. Residues 1–27 are disordered; that stretch reads MPLLSSSKLSMESRKEDSEGTAPAPPQ. At 14 to 126 the chain is on the extracellular side; that stretch reads RKEDSEGTAP…DFAEGNIHHK (113 aa). 5 disulfide bridges follow: Cys32/Cys53, Cys34/Cys38, Cys47/Cys71, Cys81/Cys95, and Cys96/Cys102. Asn44 is a glycosylation site (N-linked (GlcNAc...) asparagine). A helical membrane pass occupies residues 127–148; sequence ALLISVTVCSILLVLIIIFCYF. Over 149 to 502 the chain is Cytoplasmic; that stretch reads RYKRQEARPR…KMSESQDIKL (354 aa). The region spanning 174 to 203 is the GS domain; that stretch reads ESLKDLIEQSQSSGSGSGLPLLVQRTIAKQ. A Protein kinase domain is found at 204 to 494; that stretch reads IQMVKQIGKG…LRVKKTLAKM (291 aa). ATP is bound by residues 210–218 and Lys231; that span reads IGKGRYGEV. Asp332 functions as the Proton acceptor in the catalytic mechanism.

This sequence belongs to the protein kinase superfamily. TKL Ser/Thr protein kinase family. TGFB receptor subfamily. Mg(2+) serves as cofactor. The cofactor is Mn(2+). Post-translationally, autophosphorylated.

It is found in the cell membrane. The enzyme catalyses L-threonyl-[receptor-protein] + ATP = O-phospho-L-threonyl-[receptor-protein] + ADP + H(+). It catalyses the reaction L-seryl-[receptor-protein] + ATP = O-phospho-L-seryl-[receptor-protein] + ADP + H(+). Its function is as follows. On ligand binding, forms a receptor complex consisting of two type II and two type I transmembrane serine/threonine kinases. Type II receptors phosphorylate and activate type I receptors which autophosphorylate, then bind and activate SMAD transcription. Positively regulates chondrocyte differentiation. This chain is Bone morphogenetic protein receptor type-1B (BMPR1B), found in Gallus gallus (Chicken).